The sequence spans 417 residues: Tyrosine--tRNA ligase (417 aa).

Tyrosine 36 provides a ligand contact to L-tyrosine. The 'HIGH' region motif lies at 41 to 50 (PTADSLHIGH). Residues tyrosine 170 and glutamine 174 each coordinate L-tyrosine. Positions 231-235 (KFGKS) match the 'KMSKS' region motif. Lysine 234 serves as a coordination point for ATP. Residues 351–417 (TNLVELLIEA…GKKKYFMIIH (67 aa)) form the S4 RNA-binding domain.

This sequence belongs to the class-I aminoacyl-tRNA synthetase family. TyrS type 1 subfamily. In terms of assembly, homodimer.

It localises to the cytoplasm. It carries out the reaction tRNA(Tyr) + L-tyrosine + ATP = L-tyrosyl-tRNA(Tyr) + AMP + diphosphate + H(+). Its function is as follows. Catalyzes the attachment of tyrosine to tRNA(Tyr) in a two-step reaction: tyrosine is first activated by ATP to form Tyr-AMP and then transferred to the acceptor end of tRNA(Tyr). In Macrococcus caseolyticus (strain JCSC5402) (Macrococcoides caseolyticum), this protein is Tyrosine--tRNA ligase.